A 176-amino-acid chain; its full sequence is 2-C-methyl-D-erythritol 2,4-cyclodiphosphate synthase (176 aa).

Residues Asp-23, His-25, and His-60 each coordinate a divalent metal cation. 23–25 is a 4-CDP-2-C-methyl-D-erythritol 2-phosphate binding site; it reads DSH. 149–152 contributes to the 4-CDP-2-C-methyl-D-erythritol 2-phosphate binding site; it reads TSGE.

It belongs to the IspF family. As to quaternary structure, homotrimer. Requires a divalent metal cation as cofactor.

The enzyme catalyses 4-CDP-2-C-methyl-D-erythritol 2-phosphate = 2-C-methyl-D-erythritol 2,4-cyclic diphosphate + CMP. The protein operates within isoprenoid biosynthesis; isopentenyl diphosphate biosynthesis via DXP pathway; isopentenyl diphosphate from 1-deoxy-D-xylulose 5-phosphate: step 4/6. In terms of biological role, involved in the biosynthesis of isopentenyl diphosphate (IPP) and dimethylallyl diphosphate (DMAPP), two major building blocks of isoprenoid compounds. Catalyzes the conversion of 4-diphosphocytidyl-2-C-methyl-D-erythritol 2-phosphate (CDP-ME2P) to 2-C-methyl-D-erythritol 2,4-cyclodiphosphate (ME-CPP) with a corresponding release of cytidine 5-monophosphate (CMP). The sequence is that of 2-C-methyl-D-erythritol 2,4-cyclodiphosphate synthase from Chlamydia felis (strain Fe/C-56) (Chlamydophila felis).